We begin with the raw amino-acid sequence, 428 residues long: E3 ubiquitin-protein ligase RNF128 (428 aa).

Positions 1 to 38 are cleaved as a signal peptide; the sequence is MGPPPGAGVSCRGGCGFSRLLAWCFLLALSPQAPGSRG. N-linked (GlcNAc...) asparagine glycosylation is found at asparagine 48, asparagine 59, and asparagine 101. One can recognise a PA domain in the interval 75–183; that stretch reads SPLEPVAGVL…LKGTKILQSI (109 aa). The chain crosses the membrane as a helical span at residues 208 to 228; sequence IFFVSVSFFIITAATVGYFIF. The RING-type; atypical zinc finger occupies 277–318; sequence CAVCIELYKPNDLVRILTCNHIFHKTCVDPWLLEHRTCPMCK. Residues 346-428 are disordered; sequence ISNSASSHEE…QETAVREIKS (83 aa). A compositionally biased stretch (polar residues) spans 360–371; sequence ETASSGYASVQG.

Post-translationally, auto-ubiquitinated. Controls the development of T-cell clonal anergy by ubiquitination.

Its subcellular location is the cytoplasm. The protein resides in the endomembrane system. It is found in the cytoskeleton. It localises to the perinuclear region. It carries out the reaction S-ubiquitinyl-[E2 ubiquitin-conjugating enzyme]-L-cysteine + [acceptor protein]-L-lysine = [E2 ubiquitin-conjugating enzyme]-L-cysteine + N(6)-ubiquitinyl-[acceptor protein]-L-lysine.. It participates in protein modification; protein ubiquitination. Its function is as follows. E3 ubiquitin-protein ligase that catalyzes 'Lys-27', 'Lys-48'- or 'Lys-63'-linked polyubiquitin chains formation and plays a role in different biological processes such as modulation of immune response, cytoskeletal dynamics or protein homeostasis. Inhibits IL2 and IL4 transcription, thereby playing an important role in the induction of the anergic phenotype, a long-term stable state of T-lymphocyte unresponsiveness to antigenic stimulation associated with the blockade of interleukin production. Ubiquitinates ARPC5 with 'Lys-48' linkages and COR1A with 'Lys-63' linkages leading to their degradation, down-regulation of these cytoskeletal components results in impaired lamellipodium formation and reduced accumulation of F-actin at the immunological synapse. Functions in the patterning of the dorsal ectoderm; sensitizes ectoderm to respond to neural-inducing signals. Plays a positive role in innate immune response by promoting 'Lys-63'-linked ubiquitination of TBK1 after RNA- or DNA-virus infection. Regulates alveolar macrophage activation and neutrophil infiltration by interacting with TLR4, targeting it for degradation, and inhibiting NF-kappa-B activation, hence decreasing pro-inflammatory cytokines. Negatively regulates the IL-3/STAT5 signaling pathway by facilitating 'Lys-27'-linked polyubiquitination of IL3RA leading to its degradation via lysosomal pathway. Directly regulates the N-glycosylation process in the endoplasmic reticulum by targeting the glycosyl-transferase RPN1 for ubiquitination and degradation. Other substrates targeted for degradation by RNF128 include transmembrane proteins CD40L, CD83 or the tetraspanin CD151. The polypeptide is E3 ubiquitin-protein ligase RNF128 (RNF128) (Homo sapiens (Human)).